The primary structure comprises 113 residues: N(2)-fixation sustaining protein CowN (113 aa).

The protein belongs to the CowN family.

Functionally, is required to sustain N(2)-dependent growth in the presence of low levels of carbon monoxide (CO). Probably acts by protecting the N(2) fixation ability of the nitrogenase complex, which is inactivated in the presence of CO. This chain is N(2)-fixation sustaining protein CowN, found in Azoarcus sp. (strain BH72).